Here is a 409-residue protein sequence, read N- to C-terminus: Outer membrane protein assembly factor BamB (409 aa).

A signal peptide spans 1–34; the sequence is MAGNILLLILDYVFHAGSRTLRVCILSLLILLSG. Cysteine 35 carries N-palmitoyl cysteine lipidation. The S-diacylglycerol cysteine moiety is linked to residue cysteine 35.

The protein belongs to the BamB family. In terms of assembly, part of the Bam complex.

It is found in the cell outer membrane. Part of the outer membrane protein assembly complex, which is involved in assembly and insertion of beta-barrel proteins into the outer membrane. The chain is Outer membrane protein assembly factor BamB from Nitrosomonas eutropha (strain DSM 101675 / C91 / Nm57).